The chain runs to 556 residues: Formate--tetrahydrofolate ligase (556 aa).

Thr65–Ser72 serves as a coordination point for ATP.

This sequence belongs to the formate--tetrahydrofolate ligase family.

The enzyme catalyses (6S)-5,6,7,8-tetrahydrofolate + formate + ATP = (6R)-10-formyltetrahydrofolate + ADP + phosphate. Its pathway is one-carbon metabolism; tetrahydrofolate interconversion. The polypeptide is Formate--tetrahydrofolate ligase (Streptococcus pneumoniae serotype 4 (strain ATCC BAA-334 / TIGR4)).